We begin with the raw amino-acid sequence, 112 residues long: Nucleoid-associated protein lpp2803 (112 aa).

It belongs to the YbaB/EbfC family. Homodimer.

The protein resides in the cytoplasm. The protein localises to the nucleoid. Functionally, binds to DNA and alters its conformation. May be involved in regulation of gene expression, nucleoid organization and DNA protection. The sequence is that of Nucleoid-associated protein lpp2803 from Legionella pneumophila (strain Paris).